A 177-amino-acid polypeptide reads, in one-letter code: R-phycoerythrin beta chain (177 aa).

Residues Cys50 and Cys61 each contribute to the phycourobilin site. Residue Asn72 is modified to N4-methylasparagine. (2R,3E)-phycoerythrobilin is bound by residues Cys82 and Cys158.

Belongs to the phycobiliprotein family. In terms of assembly, heterodimer of an alpha and a beta chain. In terms of processing, contains two covalently linked phycoerythrobilin chromophores and one covalently linked phycourobilin chromophore.

It is found in the plastid. Its subcellular location is the chloroplast thylakoid membrane. Light-harvesting photosynthetic bile pigment-protein from the phycobiliprotein complex. The sequence is that of R-phycoerythrin beta chain (cpeB) from Pyropia yezoensis (Susabi-nori).